The chain runs to 407 residues: Putative glucose/galactose transporter (407 aa).

The next 12 helical transmembrane spans lie at 11–31 (GSLTALFFLMGFITVLNDILI), 47–67 (LIQFCFFGAYFIMGGVFGNVI), 70–90 (IGYPFGVVLGFVITASGCALF), 96–116 (FGSYGFFLGALFILASGIVCL), 139–159 (VQAFNSLGTTLGPIFGSLLIF), 180–200 (VQMPYLGLAVFSLLLALVMYL), 225–245 (FVFGALGIFFYVGGEVAIGSF), 263–283 (HYLVYYWGGAMVGRFLGSALM), 300–320 (IILIALAILIGGKIALFALTF), 321–341 (VGFFNSIMFPTIFSLATLNLG), 349–369 (GVISMAIVGGALIPPIQGVVT), and 378–398 (NLLYAYSVPLLCYFYILFFAL).

This sequence belongs to the major facilitator superfamily. FHS transporter (TC 2.A.1.7) family.

Its subcellular location is the cell inner membrane. In terms of biological role, intake of glucose and galactose. The protein is Putative glucose/galactose transporter (gluP) of Helicobacter pylori (strain J99 / ATCC 700824) (Campylobacter pylori J99).